The sequence spans 276 residues: Secretagogin (276 aa).

EF-hand domains follow at residues L12 to K47, D71 to N93, D105 to H140, K149 to F184, E197 to L232, and V240 to P276. The Ca(2+) site is built by D71, S73, D75, C77, E82, D118, D120, S122, E129, D162, N164, D166, R168, D173, D210, S212, T214, E221, D254, N256, D258, K260, and E265.

The protein localises to the cytoplasm. Its subcellular location is the secreted. The protein resides in the cytoplasmic vesicle. It localises to the secretory vesicle membrane. The protein is Secretagogin (SCGN) of Bos taurus (Bovine).